The following is a 178-amino-acid chain: ATP synthase subunit delta (178 aa).

Belongs to the ATPase delta chain family. In terms of assembly, F-type ATPases have 2 components, F(1) - the catalytic core - and F(0) - the membrane proton channel. F(1) has five subunits: alpha(3), beta(3), gamma(1), delta(1), epsilon(1). F(0) has three main subunits: a(1), b(2) and c(10-14). The alpha and beta chains form an alternating ring which encloses part of the gamma chain. F(1) is attached to F(0) by a central stalk formed by the gamma and epsilon chains, while a peripheral stalk is formed by the delta and b chains.

The protein resides in the cell inner membrane. F(1)F(0) ATP synthase produces ATP from ADP in the presence of a proton or sodium gradient. F-type ATPases consist of two structural domains, F(1) containing the extramembraneous catalytic core and F(0) containing the membrane proton channel, linked together by a central stalk and a peripheral stalk. During catalysis, ATP synthesis in the catalytic domain of F(1) is coupled via a rotary mechanism of the central stalk subunits to proton translocation. In terms of biological role, this protein is part of the stalk that links CF(0) to CF(1). It either transmits conformational changes from CF(0) to CF(1) or is implicated in proton conduction. This chain is ATP synthase subunit delta, found in Aromatoleum aromaticum (strain DSM 19018 / LMG 30748 / EbN1) (Azoarcus sp. (strain EbN1)).